The primary structure comprises 156 residues: Small ribosomal subunit protein uS7 (156 aa).

The protein belongs to the universal ribosomal protein uS7 family. As to quaternary structure, part of the 30S ribosomal subunit. Contacts proteins S9 and S11.

Functionally, one of the primary rRNA binding proteins, it binds directly to 16S rRNA where it nucleates assembly of the head domain of the 30S subunit. Is located at the subunit interface close to the decoding center, probably blocks exit of the E-site tRNA. This is Small ribosomal subunit protein uS7 from Synechocystis sp. (strain ATCC 27184 / PCC 6803 / Kazusa).